A 234-amino-acid polypeptide reads, in one-letter code: ATP-dependent dethiobiotin synthetase BioD (234 aa).

12-17 contacts ATP; that stretch reads DVGKTI. Thr16 contacts Mg(2+). Lys37 is a catalytic residue. A substrate-binding site is contributed by Thr41. Residues Asp54 and 115–118 contribute to the ATP site; that span reads EGAG. Mg(2+) is bound by residues Asp54 and Glu115.

Belongs to the dethiobiotin synthetase family. As to quaternary structure, homodimer. Mg(2+) serves as cofactor.

The protein localises to the cytoplasm. It carries out the reaction (7R,8S)-7,8-diammoniononanoate + CO2 + ATP = (4R,5S)-dethiobiotin + ADP + phosphate + 3 H(+). It participates in cofactor biosynthesis; biotin biosynthesis; biotin from 7,8-diaminononanoate: step 1/2. Functionally, catalyzes a mechanistically unusual reaction, the ATP-dependent insertion of CO2 between the N7 and N8 nitrogen atoms of 7,8-diaminopelargonic acid (DAPA, also called 7,8-diammoniononanoate) to form a ureido ring. The sequence is that of ATP-dependent dethiobiotin synthetase BioD from Lysinibacillus sphaericus (strain C3-41).